The chain runs to 163 residues: MPKPPDYSELSDSLTLAVGTGRFSGPLHRAWRMMNFRQRMGWIGVGLYLLASAAAFYYVFEISETYNRLALEHIQQHPEEPLEGTTWTHSLKAQLLSLPFWVWTVIFLVPYLQMFLFLYSCTRADPKTVGYCIIPICLAVICNRHQAFVKASNQISRLQLIDT.

A run of 2 helical transmembrane segments spans residues 40 to 60 (MGWIGVGLYLLASAAAFYYVF) and 98 to 118 (LPFWVWTVIFLVPYLQMFLFL).

It belongs to the LYSET family. In terms of assembly, interacts with GNPTAB; this interaction is important for proper localization of GNPTAB in Golgi stacks. Interacts with MBTPS1.

The protein localises to the golgi apparatus membrane. In terms of biological role, required for mannose-6-phosphate-dependent trafficking of lysosomal enzymes. LYSET bridges GlcNAc-1-phosphate transferase (GNPTAB), to the membrane-bound transcription factor site-1 protease (MBTPS1), thus allowing proteolytic activation of the GNPTAB. GNPTAB is involved in the regulation of M6P-dependent Golgi-to-lysosome trafficking of lysosomal enzymes. LYSET is thus an essential factor for maturation and delivery of lysosomal hydrolases. Its function is as follows. (Microbial infection) Essential for infection by muliple viruses, including SARS-CoV-2, that utilize activated cathepsins for entry after M6P-dependent lysosomal transport. In Homo sapiens (Human), this protein is Lysosomal enzyme trafficking factor.